Here is a 2524-residue protein sequence, read N- to C-terminus: Neurogenic locus notch homolog protein 1 (2524 aa).

A signal peptide spans 1-19; the sequence is MDRIGLAVLLCSLPVLTQG. 4 consecutive EGF-like domains span residues 20 to 57, 58 to 99, 102 to 140, and 141 to 177; these read LRCT…ERCQ, FPNP…KVCL, VDNA…DSCQ, and QADP…ATCK. At 20–1729 the chain is on the extracellular side; the sequence is LRCTQTAEMC…METPKPSTLY (1710 aa). 33 cysteine pairs are disulfide-bonded: C22-C35, C29-C45, C47-C56, C62-C74, C68-C87, C89-C98, C106-C117, C111-C128, C130-C139, C145-C156, C150-C165, C167-C176, C183-C194, C188-C203, C205-C214, C221-C232, C226-C242, C244-C253, C260-C271, C265-C280, C282-C291, C298-C311, C305-C320, C322-C331, C338-C349, C343-C358, C360-C369, C375-C386, C380-C397, C399-C408, C415-C428, C422-C437, and C439-C448. Residues 179 to 215 form the EGF-like 5; calcium-binding domain; it reads DINECSQNPCKNGGQCINEFGSYRCTCQNRFTGRNCD. One can recognise an EGF-like 6 domain in the interval 217–254; sequence PYVPCNPSPCLNGGTCRQTDDTSYDCTCLPGFSGQNCE. T231 carries O-linked (Fuc...) threonine; alternate glycosylation. T231 is a glycosylation site (O-linked (GalNAc...) threonine; alternate). One can recognise an EGF-like 7; calcium-binding domain in the interval 256–292; that stretch reads NIDDCPSNNCRNGGTCVDGVNTYNCQCPPDWTGQYCT. The EGF-like 8; calcium-binding domain maps to 294–332; sequence DVDECQLMPNACQNGGTCHNTYGGYNCVCVNGWTGEDCS. Residues 334–370 enclose the EGF-like 9; calcium-binding domain; sequence NIDDCANAACHSGATCHDRVASFYCECPHGRTGLLCH. Positions 371–409 constitute an EGF-like 10 domain; it reads LDNACISNPCNEGSNCDTNPVNGKAICTCPPGYTGPACN. Residues 411-449 enclose the EGF-like 11; calcium-binding domain; it reads DVDECSLGANPCEHGGRCTNTLGSFQCNCPQGYAGPRCE. Ca(2+) is bound by residues T431 and S434. S434 carries an O-linked (Glc...) serine glycan. Ca(2+) contacts are provided by D451, V452, and E454. The region spanning 451 to 487 is the EGF-like 12; calcium-binding domain; it reads DVNECLSNPCQNDSTCLDQIGEFQCICMPGYEGLYCE. 3 cysteine pairs are disulfide-bonded: C455/C466, C460/C475, and C477/C486. An O-linked (Glc...) serine glycan is attached at S457. A glycan (N-linked (GlcNAc...) asparagine) is linked at N462. T465 is a glycosylation site (O-linked (Fuc...) threonine). Residues D468 and Q469 each coordinate Ca(2+). N489, I490, and E492 together coordinate Ca(2+). The EGF-like 13; calcium-binding domain occupies 489-525; it reads NIDECASNPCLHNGKCIDKINEFRCDCPTGFSGNLCQ. Cystine bridges form between C493–C504, C498–C513, C515–C524, C531–C542, C536–C551, C553–C562, C569–C579, C574–C588, C590–C599, C606–C617, C611–C626, C628–C637, C644–C654, C649–C663, C665–C674, C681–C692, C686–C701, C703–C712, C719–C729, C724–C738, C740–C749, C756–C767, C761–C776, C778–C787, C794–C805, C799–C814, C816–C825, C832–C843, C837–C854, C856–C865, C872–C883, C877–C892, C894–C903, C910–C921, C915–C930, C932–C941, C948–C959, C953–C968, C970–C979, C986–C997, C991–C1006, C1008–C1017, C1024–C1035, C1029–C1044, C1046–C1055, C1062–C1073, C1067–C1082, C1084–C1093, C1100–C1121, C1115–C1130, C1132–C1141, C1148–C1159, C1153–C1168, C1170–C1179, C1186–C1197, C1191–C1206, C1208–C1217, C1224–C1243, C1237–C1252, C1254–C1263, C1270–C1283, C1275–C1292, C1294–C1303, C1310–C1321, C1315–C1333, C1335–C1344, C1351–C1362, C1356–C1371, C1373–C1382, C1390–C1401, C1395–C1412, C1414–C1423, C1447–C1470, C1452–C1465, and C1461–C1477. The O-linked (Glc...) serine glycan is linked to S495. Residues D506 and K507 each contribute to the Ca(2+) site. One can recognise an EGF-like 14; calcium-binding domain in the interval 527-563; it reads DFDECTSTPCKNGAKCLDGPNSYTCQCTEGFTGRHCE. An EGF-like 15; calcium-binding domain is found at 565 to 600; sequence DINECIPDPCHYGTCKDGIATFTCLCRPGYTGRLCD. Residues 602–638 form the EGF-like 16; calcium-binding domain; sequence DINECLSKPCLNGGQCTDRENGYICTCPKGTTGVNCE. The region spanning 640–675 is the EGF-like 17 domain; it reads KIDDCASNLCDNGKCIDKIDGYECTCEPGYTGKLCN. Positions 677-713 constitute an EGF-like 18; calcium-binding domain; the sequence is NINECDSNPCRNGGTCKDQINGFTCVCPDGYHDHMCL. One can recognise an EGF-like 19; calcium-binding domain in the interval 715–750; sequence EVNECNSNPCIHGACHDGVNGYKCDCEAGWSGSNCD. In terms of domain architecture, EGF-like 20; calcium-binding spans 752–788; sequence NNNECESNPCMNGGTCKDMTGAYICTCKAGFSGPNCQ. In terms of domain architecture, EGF-like 21; calcium-binding spans 790 to 826; the sequence is NINECSSNPCLNHGTCIDDVAGYKCNCMLPYTGAICE. One can recognise an EGF-like 22 domain in the interval 828–866; sequence VLAPCAGSPCKNGGRCKESEDFETFSCECPPGWQGQTCE. An EGF-like 23; calcium-binding domain is found at 868 to 904; the sequence is DMNECVNRPCRNGATCQNTNGSYKCNCKPGYTGRNCE. Residue N887 is glycosylated (N-linked (GlcNAc...) asparagine). One can recognise an EGF-like 24; calcium-binding domain in the interval 906-942; that stretch reads DIDDCQPNPCHNGGSCSDGINMFFCNCPAGFRGPKCE. The EGF-like 25; calcium-binding domain occupies 944-980; the sequence is DINECASNPCKNGANCTDCVNSYTCTCQPGFSGIHCE. N-linked (GlcNAc...) asparagine glycosylation occurs at N958. Positions 982 to 1018 constitute an EGF-like 26 domain; the sequence is NTPDCTESSCFNGGTCIDGINTFTCQCPPGFTGSYCQ. The EGF-like 27; calcium-binding domain maps to 1020-1056; that stretch reads DINECDSKPCLNGGTCQDSYGTYKCTCPQGYTGLNCQ. EGF-like domains lie at 1058–1094 and 1096–1142; these read LVRW…VYCD and PSVS…SYCE. Positions 1144–1180 constitute an EGF-like 30; calcium-binding domain; that stretch reads QVDECSPNPCQNGATCTDYLGGYSCECVAGYHGVNCS. N1178 carries an N-linked (GlcNAc...) asparagine glycan. The region spanning 1182-1218 is the EGF-like 31; calcium-binding domain; sequence EINECLSHPCQNGGTCIDLINTYKCSCPRGTQGVHCE. Positions 1220–1264 constitute an EGF-like 32; calcium-binding domain; that stretch reads NVDDCTPFYDSFTLEPKCFNNGKCIDRVGGYNCICPPGFVGERCE. EGF-like domains follow at residues 1266 to 1304, 1306 to 1346, 1347 to 1383, and 1386 to 1424; these read DVNE…RRCE, VVDG…TCEY, DSRT…ATCQ, and VISP…LFCH. An O-linked (Fuc...) threonine; alternate glycan is attached at T1400. Residue T1400 is glycosylated (O-linked (GalNAc...) threonine; alternate). LNR repeat units follow at residues 1447–1487, 1488–1529, and 1530–1564; these read CENE…PWKN, CTQS…CNPL, and YDQY…NMPE. N1487 carries N-linked (GlcNAc...) asparagine glycosylation. 5 cysteine pairs are disulfide-bonded: C1488–C1512, C1494–C1507, C1503–C1519, C1534–C1547, and C1543–C1559. N1508 carries an N-linked (GlcNAc...) asparagine glycan. N-linked (GlcNAc...) asparagine glycosylation is present at N1584. A helical membrane pass occupies residues 1730–1750; the sequence is PMLSMLVIPLLIIFVFMMVIV. Residues 1751–2524 are Cytoplasmic-facing; it reads NKKRRREHGQ…QRTHIPEAFK (774 aa). ANK repeat units follow at residues 1876–1919, 1924–1953, 1957–1987, 1991–2020, 2024–2053, and 2057–2086; these read DGFT…QLHN, TGET…DANV, MGRT…DLDA, DGTT…DVNA, FGKS…NKDM, and KEET…NRDI. Disordered stretches follow at residues 2144–2230, 2369–2407, and 2451–2524; these read NMKP…LNHL, MQAQ…FCSS, and LTPP…EAFK. Composition is skewed to polar residues over residues 2180–2192 and 2208–2230; these read GKTT…SSGV and DVSS…LNHL. A compositionally biased stretch (low complexity) spans 2369 to 2394; sequence MQAQQMQQQQNLQLHQSMQQQHHNSS. Polar residues-rich tracts occupy residues 2395 to 2407 and 2451 to 2471; these read TTST…FCSS and LTPP…SHQL. Residues 2481–2496 show a composition bias toward low complexity; sequence PSPESPDQWSSSSPHS. Over residues 2497–2516 the composition is skewed to polar residues; that stretch reads NMSDWSEGISSPPTSMQPQR.

The protein belongs to the NOTCH family. As to quaternary structure, forms a ternary complex with nrarp and rbpj/suh. In terms of processing, O-glycosylated on the EGF-like domains. Contains both O-linked fucose and O-linked glucose. O-linked glycosylation by galnt11 is involved in determination of left/right symmetry: glycosylation promotes activation of notch1, possibly by promoting cleavage by adam17, modulating the balance between motile and immotile (sensory) cilia at the left-right organiser (LRO). Synthesized in the endoplasmic reticulum as an inactive form which is proteolytically cleaved by a furin-like convertase in the trans-Golgi network before it reaches the plasma membrane to yield an active, ligand-accessible form. Cleavage results in a C-terminal fragment N(TM) and a N-terminal fragment N(EC). Following ligand binding, it is cleaved by adam17 to yield a membrane-associated intermediate fragment called notch extracellular truncation (NEXT). Following endocytosis, this fragment is then cleaved by presenilin dependent gamma-secretase to release a Notch-derived peptide containing the intracellular domain (NICD) from the membrane.

The protein localises to the cell membrane. It localises to the nucleus. Functions as a receptor for membrane-bound ligands Jagged-1 (JAG1), Jagged-2 (JAG2) and Delta-1 (DLL1) to regulate cell-fate determination. Upon ligand activation through the released notch intracellular domain (NICD) it forms a transcriptional activator complex with RBPJ/RBPSUH and activates genes of the enhancer of split locus. Affects the implementation of differentiation, proliferation and apoptotic programs. Involved in angiogenesis; negatively regulates endothelial cell proliferation and migration and angiogenic sprouting. Involved in the maturation of both CD4(+) and CD8(+) cells in the thymus. Important for follicular differentiation and possibly cell fate selection within the follicle. During cerebellar development, functions as a receptor for neuronal DNER and is involved in the differentiation of Bergmann glia. Represses neuronal and myogenic differentiation. May play an essential role in postimplantation development, probably in some aspect of cell specification and/or differentiation. May be involved in mesoderm development, somite formation and neurogenesis. Involved in determination of left/right symmetry by modulating the balance between motile and immotile (sensory) cilia at the left-right organiser (LRO). This is Neurogenic locus notch homolog protein 1 (notch1) from Xenopus laevis (African clawed frog).